A 182-amino-acid chain; its full sequence is UPF0316 protein Sde_0566 (182 aa).

The next 3 membrane-spanning stretches (helical) occupy residues 7 to 27, 41 to 61, and 67 to 87; these read VAPE…VSLG, LAAF…GQVF, and WYLA…GMWI.

This sequence belongs to the UPF0316 family.

The protein resides in the cell membrane. This chain is UPF0316 protein Sde_0566, found in Saccharophagus degradans (strain 2-40 / ATCC 43961 / DSM 17024).